Consider the following 376-residue polypeptide: Flap endonuclease 1 (376 aa).

Residues 1–105 (MGIKGLSKLL…GELHKRKENA (105 aa)) are N-domain. Asp-34 is a Mg(2+) binding site. Residues Arg-47 and Arg-71 each contribute to the DNA site. Mg(2+)-binding residues include Asp-87, Glu-159, Glu-161, Asp-180, and Asp-182. The segment at 123–254 (QAKKLMKRTA…ITAFELIQQY (132 aa)) is I-domain. Glu-159 contributes to the DNA binding site. The DNA site is built by Gly-232 and Asp-234. Residue Asp-234 coordinates Mg(2+). The tract at residues 336–344 (AQGRLDSFF) is interaction with PCNA. The tract at residues 354 to 376 (SEAASGVKRKKPTTKAKESRKKK) is disordered. Residues 360–376 (VKRKKPTTKAKESRKKK) are compositionally biased toward basic residues.

It belongs to the XPG/RAD2 endonuclease family. FEN1 subfamily. As to quaternary structure, interacts with PCNA. Three molecules of FEN1 bind to one PCNA trimer with each molecule binding to one PCNA monomer. PCNA stimulates the nuclease activity without altering cleavage specificity. The cofactor is Mg(2+). Phosphorylated. Phosphorylation upon DNA damage induces relocalization to the nuclear plasma.

The protein resides in the nucleus. It localises to the nucleolus. Its subcellular location is the nucleoplasm. The protein localises to the mitochondrion. Its function is as follows. Structure-specific nuclease with 5'-flap endonuclease and 5'-3' exonuclease activities involved in DNA replication and repair. During DNA replication, cleaves the 5'-overhanging flap structure that is generated by displacement synthesis when DNA polymerase encounters the 5'-end of a downstream Okazaki fragment. It enters the flap from the 5'-end and then tracks to cleave the flap base, leaving a nick for ligation. Also involved in the long patch base excision repair (LP-BER) pathway, by cleaving within the apurinic/apyrimidinic (AP) site-terminated flap. Acts as a genome stabilization factor that prevents flaps from equilibrating into structures that lead to duplications and deletions. Also possesses 5'-3' exonuclease activity on nicked or gapped double-stranded DNA, and exhibits RNase H activity. Also involved in replication and repair of rDNA and in repairing mitochondrial DNA. In Entamoeba histolytica (strain ATCC 30459 / HM-1:IMSS / ABRM), this protein is Flap endonuclease 1.